We begin with the raw amino-acid sequence, 742 residues long: Phosphoribosylformylglycinamidine synthase subunit PurL (742 aa).

Residue His54 is part of the active site. ATP is bound by residues Tyr57 and Lys96. Position 98 (Glu98) interacts with Mg(2+). Substrate is bound by residues 99–102 and Arg121; that span reads SHNH. The active-site Proton acceptor is the His100. Residue Asp122 participates in Mg(2+) binding. Gln245 lines the substrate pocket. Asp273 is a binding site for Mg(2+). Residue 317-319 participates in substrate binding; the sequence is ESQ. Positions 500 and 537 each coordinate ATP. Position 538 (Asn538) interacts with Mg(2+). Ser540 contributes to the substrate binding site.

Belongs to the FGAMS family. As to quaternary structure, monomer. Part of the FGAM synthase complex composed of 1 PurL, 1 PurQ and 2 PurS subunits.

The protein resides in the cytoplasm. It catalyses the reaction N(2)-formyl-N(1)-(5-phospho-beta-D-ribosyl)glycinamide + L-glutamine + ATP + H2O = 2-formamido-N(1)-(5-O-phospho-beta-D-ribosyl)acetamidine + L-glutamate + ADP + phosphate + H(+). It functions in the pathway purine metabolism; IMP biosynthesis via de novo pathway; 5-amino-1-(5-phospho-D-ribosyl)imidazole from N(2)-formyl-N(1)-(5-phospho-D-ribosyl)glycinamide: step 1/2. Functionally, part of the phosphoribosylformylglycinamidine synthase complex involved in the purines biosynthetic pathway. Catalyzes the ATP-dependent conversion of formylglycinamide ribonucleotide (FGAR) and glutamine to yield formylglycinamidine ribonucleotide (FGAM) and glutamate. The FGAM synthase complex is composed of three subunits. PurQ produces an ammonia molecule by converting glutamine to glutamate. PurL transfers the ammonia molecule to FGAR to form FGAM in an ATP-dependent manner. PurS interacts with PurQ and PurL and is thought to assist in the transfer of the ammonia molecule from PurQ to PurL. This chain is Phosphoribosylformylglycinamidine synthase subunit PurL, found in Geobacillus kaustophilus (strain HTA426).